The sequence spans 181 residues: Vacuolar ATPase assembly protein VMA22 (181 aa).

Residue Ser-2 is modified to N-acetylalanine. Basic and acidic residues-rich tracts occupy residues 93–107 and 114–125; these read AQDKQEKKEEEDNKL and TKPEKQKTQSHK. The disordered stretch occupies residues 93-125; that stretch reads AQDKQEKKEEEDNKLTQRKKGTKPEKQKTQSHK.

Functionally, required for V-ATPase activity. The polypeptide is Vacuolar ATPase assembly protein VMA22 (VMA22) (Saccharomyces cerevisiae (strain ATCC 204508 / S288c) (Baker's yeast)).